We begin with the raw amino-acid sequence, 59 residues long: UPF0391 membrane protein lpg2521 (59 aa).

Transmembrane regions (helical) follow at residues 5–25 (ALIF…GIAV) and 30–50 (IAKI…IMGL).

Belongs to the UPF0391 family.

It localises to the cell membrane. This Legionella pneumophila subsp. pneumophila (strain Philadelphia 1 / ATCC 33152 / DSM 7513) protein is UPF0391 membrane protein lpg2521.